A 141-amino-acid chain; its full sequence is Transmembrane protein 216 (141 aa).

The next 4 helical transmembrane spans lie at 15-35, 49-69, 82-102, and 115-135; these read VLFFLNGWYYATYFLLELLIF, LVLDVVMLLLYLGIEVIRLFF, LGISVALTFPSAMMASYYLLL, and SILLFFCGSELLLEMLTLATF.

In terms of assembly, part of the tectonic-like complex (also named B9 complex). Interacts with TMEM107.

Its subcellular location is the membrane. It localises to the cytoplasm. The protein resides in the cytoskeleton. The protein localises to the cilium basal body. Its function is as follows. Part of the tectonic-like complex which is required for tissue-specific ciliogenesis and may regulate ciliary membrane composition. The chain is Transmembrane protein 216 (Tmem216) from Mus musculus (Mouse).